Reading from the N-terminus, the 1208-residue chain is DNA-directed RNA polymerase subunit beta (1208 aa).

This sequence belongs to the RNA polymerase beta chain family. In terms of assembly, the RNAP catalytic core consists of 2 alpha, 1 beta, 1 beta' and 1 omega subunit. When a sigma factor is associated with the core the holoenzyme is formed, which can initiate transcription.

It catalyses the reaction RNA(n) + a ribonucleoside 5'-triphosphate = RNA(n+1) + diphosphate. Functionally, DNA-dependent RNA polymerase catalyzes the transcription of DNA into RNA using the four ribonucleoside triphosphates as substrates. In Enterococcus faecium (Streptococcus faecium), this protein is DNA-directed RNA polymerase subunit beta.